A 418-amino-acid chain; its full sequence is D-amino acid dehydrogenase (418 aa).

Residue 3–17 (VLVLGAGVAGVSSAW) participates in FAD binding.

This sequence belongs to the DadA oxidoreductase family. FAD is required as a cofactor.

It carries out the reaction a D-alpha-amino acid + A + H2O = a 2-oxocarboxylate + AH2 + NH4(+). The protein operates within amino-acid degradation; D-alanine degradation; NH(3) and pyruvate from D-alanine: step 1/1. Oxidative deamination of D-amino acids. The chain is D-amino acid dehydrogenase from Neisseria meningitidis serogroup C / serotype 2a (strain ATCC 700532 / DSM 15464 / FAM18).